A 151-amino-acid polypeptide reads, in one-letter code: uncharacterized protein (151 aa).

The segment at 1–24 (MHAKTKKLGTDTSYKRPQVTAQEQ) is disordered.

This is an uncharacterized protein from Acanthamoeba polyphaga mimivirus (APMV).